The following is a 210-amino-acid chain: Transcriptional regulator MxiE (210 aa).

In terms of domain architecture, HTH araC/xylS-type spans 99–199 (YHLVLYLLRT…GFSARELSNI (101 aa)). 2 DNA-binding regions (H-T-H motif) span residues 118–139 (KSLTEHYGVSEAYFRSLCRKAL) and 166–189 (ITSAAMNNGYASTSHFSNEIKTRL).

In terms of biological role, necessary for the secretion of ipa invasins. Probable transcriptional regulatory protein. This chain is Transcriptional regulator MxiE (mxiE), found in Shigella flexneri.